Consider the following 330-residue polypeptide: Transcription factor zip1 (330 aa).

Over residues 133–148 (SKETQEKTSSQRELFE) the composition is skewed to basic and acidic residues. Disordered stretches follow at residues 133 to 165 (SKETQEKTSSQRELFEQKSSVASASKDNVSSSS) and 238 to 277 (PSLSSYKGAQSPNANSKRTKATSAIRTAAEEDKRRRNTAA). The span at 150-165 (KSSVASASKDNVSSSS) shows a compositional bias: low complexity. The segment covering 244–262 (KGAQSPNANSKRTKATSAI) has biased composition (polar residues). The bZIP domain occupies 264–327 (TAAEEDKRRR…NWLKGLIRPT (64 aa)). Residues 270–288 (KRRRNTAASARFRIKKKLK) are basic motif. Positions 292-320 (LERTAKELTEKVAILETRVRELEMENNWL) are leucine-zipper.

It belongs to the bZIP family. As to quaternary structure, interacts with pof1.

The protein resides in the nucleus. In terms of biological role, mediates cell growth arrest in response to cadmium exposure, which is essential to maintain cell viability. Regulates cadmium stress specific genes. In Schizosaccharomyces pombe (strain 972 / ATCC 24843) (Fission yeast), this protein is Transcription factor zip1 (zip1).